The following is a 575-amino-acid chain: Sodium/calcium exchanger NCL2 (575 aa).

A run of 3 helical transmembrane segments spans residues Phe69–Leu89, Ile112–Val132, and Val146–Gly166. An N-linked (GlcNAc...) asparagine glycan is attached at Asn179. A run of 2 helical transmembrane segments spans residues Ile210 to His230 and Val237 to Phe257. EF-hand domains are found at residues Pro297–Glu332 and Asn337–Glu372. Asn298 is a glycosylation site (N-linked (GlcNAc...) asparagine). Residues Asp310, Asp312, Asp314, Lys316, Glu321, Asp350, Ser352, Asn354, and Glu361 each contribute to the Ca(2+) site. The next 5 membrane-spanning stretches (helical) occupy residues Trp417–Ala437, Phe457–Ile477, Val494–Tyr514, Phe522–Phe542, and Leu548–Leu568.

Belongs to the Ca(2+):cation antiporter (CaCA) (TC 2.A.19) family.

The protein localises to the cell membrane. Its function is as follows. May function as a sodium/calcium exchanger (NCX) and participate in the maintenance of calcium homeostasis. May play a role abiotic stress responses. This chain is Sodium/calcium exchanger NCL2, found in Oryza sativa subsp. japonica (Rice).